We begin with the raw amino-acid sequence, 118 residues long: Small ribosomal subunit protein uS13 (118 aa).

The disordered stretch occupies residues 94–118 (SLPLRGQRTKTNARTRKGPRKPIRK).

Belongs to the universal ribosomal protein uS13 family. In terms of assembly, part of the 30S ribosomal subunit. Forms a loose heterodimer with protein S19. Forms two bridges to the 50S subunit in the 70S ribosome.

In terms of biological role, located at the top of the head of the 30S subunit, it contacts several helices of the 16S rRNA. In the 70S ribosome it contacts the 23S rRNA (bridge B1a) and protein L5 of the 50S subunit (bridge B1b), connecting the 2 subunits; these bridges are implicated in subunit movement. Contacts the tRNAs in the A and P-sites. This Shewanella sediminis (strain HAW-EB3) protein is Small ribosomal subunit protein uS13.